The following is a 1271-amino-acid chain: Probable WRKY transcription factor protein 1 (1271 aa).

The segment covering 1 to 12 (MGAQYSTELNKY) has biased composition (polar residues). Disordered stretches follow at residues 1–138 (MGAQ…NSDR), 204–312 (NNNN…QQNG), and 370–515 (NNNN…RTNS). The stretch at 9 to 71 (LNKYNNNNNN…NNNNNNNNNN (63 aa)) forms a coiled coil. Composition is skewed to low complexity over residues 13–103 (NNNN…NNNN), 116–135 (INNTNKDTNIPNNSNSNNNN), 204–216 (NNNNNNNNNNENN), and 223–259 (SSTTTTTTTTTTTNNNSNNNNNNNNNNNNNNNNNNNN). Residues 260-274 (NEDDEDDYGDDDTIE) are compositionally biased toward acidic residues. Residues 297–312 (SNLNDTNGGNSPQQNG) are compositionally biased toward polar residues. Residues 320 to 372 (KKLLALQQKQLEQEQEQKQQQKQQQQQQQQQQQQQQQQQQQQQKDAIENINNN) are a coiled coil. The segment covering 370 to 388 (NNNNNNKLQPIVKNSVNKT) has biased composition (low complexity). Residues 413 to 442 (NEDEYDASDEYIDDDDDDDEKYDDDDDEYF) are compositionally biased toward acidic residues. Low complexity predominate over residues 443–458 (EGNNNNNYKKNNISNK). Positions 475–487 (EIFKQKKLNHDKN) are enriched in basic and acidic residues. Over residues 488–515 (QSNPKQQLTSHSEFDNSLLNKNQSRTNS) the composition is skewed to polar residues. Residues 520–574 (LQIKEENYHQIQQEHGEKQQQQQQQQQQPQQQQQQQQQQQQQQQQEMQVDKEQTE) adopt a coiled-coil conformation. Positions 578–587 (NTNKKEEQKP) are enriched in basic and acidic residues. Disordered stretches follow at residues 578 to 650 (NTNK…EGFL) and 667 to 811 (SKKS…NISN). The span at 610–642 (NNENNNNNNNNNNNNNNNNNNNNNNNNNNYRNN) shows a compositional bias: low complexity. The span at 672 to 702 (NVVPTSPKSNLSDQQPPFSPVQISPQKQSPA) shows a compositional bias: polar residues. Composition is skewed to low complexity over residues 703 to 715 (TTTTTTTTTTPTP), 725 to 766 (NNNI…NNIN), and 774 to 811 (NSTQNNNNNNNNNNNSPQNSNTNSNNSNNSNNSNNISN). Residues 766-786 (NNEEDEENNSTQNNNNNNNNN) are a coiled coil. Positions 808–872 (NISNIVSDGY…YKGEHCHGFP (65 aa)) form a DNA-binding region, WRKY 1. 4 residues coordinate Zn(2+): Cys839, Cys844, His867, and His869. The interval 890-1095 (FEGLDGNNNN…RFNGTSESKG (206 aa)) is disordered. The span at 895–918 (GNNNNNNNNNNNNNNYSSNSNSNG) shows a compositional bias: low complexity. Residues 919–937 (NGNGNGNGNGNGNGNGNGN) show a composition bias toward gly residues. The span at 938 to 956 (SNGNQDQNGNSFNDQNGDS) shows a compositional bias: low complexity. Polar residues predominate over residues 957 to 966 (PTQHGQISPM). Low complexity predominate over residues 967-995 (NSPKNTIPTTTTTTTSISTYVNTNSTNKK). Residues 998–1010 (SKQEKKISVKNET) are compositionally biased toward basic and acidic residues. Positions 1011 to 1021 (TDDDEFQEDID) are enriched in acidic residues. Residues 1013–1040 (DDEFQEDIDQLSNNNNNNNNNNNNNNNN) adopt a coiled-coil conformation. Positions 1025-1085 (NNNNNNNNNN…NNNNNNNNNN (61 aa)) are enriched in low complexity. Residues 1105 to 1167 (SSIDHLDDGF…YRGKHNHDPP (63 aa)) constitute a DNA-binding region (WRKY 2). Zn(2+) contacts are provided by Cys1136, Cys1141, His1162, and His1164. Residues 1180-1210 (NGLYNNNNNNNNNNNNNNNNNNNNNNINNIN) form a disordered region. Residues 1184–1210 (NNNNNNNNNNNNNNNNNNNNNNINNIN) are compositionally biased toward low complexity.

The protein belongs to the WRKY group I family.

Its subcellular location is the nucleus. Functionally, probable transcription factor. Interacts specifically with the W box (5'-(T)TGAC[CT]-3'), a frequently occurring elicitor-responsive cis-acting element. The chain is Probable WRKY transcription factor protein 1 (wrky1) from Dictyostelium discoideum (Social amoeba).